Reading from the N-terminus, the 290-residue chain is Acetylglutamate kinase (290 aa).

Residues 72–73, Arg94, and Asn187 each bind substrate; that span reads GG.

The protein belongs to the acetylglutamate kinase family. ArgB subfamily.

The protein resides in the plastid. It localises to the chloroplast. It catalyses the reaction N-acetyl-L-glutamate + ATP = N-acetyl-L-glutamyl 5-phosphate + ADP. Its pathway is amino-acid biosynthesis; L-arginine biosynthesis; N(2)-acetyl-L-ornithine from L-glutamate: step 2/4. Functionally, catalyzes the ATP-dependent phosphorylation of N-acetyl-L-glutamate. In Cyanidioschyzon merolae (strain NIES-3377 / 10D) (Unicellular red alga), this protein is Acetylglutamate kinase.